Here is a 417-residue protein sequence, read N- to C-terminus: Transmembrane protease serine 11D (417 aa).

Residues 1-17 (MYRPRSMVSPSRFFNPF) lie on the Cytoplasmic side of the membrane. Residues 18–38 (MVALIVIITVGLLAMTAGLLI) form a helical; Signal-anchor for type II membrane protein membrane-spanning segment. Topologically, residues 39-417 (HFLAFDKRAY…RNWIRQQTGI (379 aa)) are extracellular. Residues 46-162 (RAYFYHSNFH…SNGITSLTDQ (117 aa)) enclose the SEA domain. 4 cysteine pairs are disulfide-bonded: Cys-172–Cys-291, Cys-211–Cys-227, Cys-336–Cys-352, and Cys-363–Cys-392. One can recognise a Peptidase S1 domain in the interval 186 to 416 (IIGGTQAETG…YRNWIRQQTG (231 aa)). Catalysis depends on charge relay system residues His-226 and Asp-271. Catalysis depends on Ser-367, which acts as the Charge relay system.

The protein belongs to the peptidase S1 family. Monomer. Isoform 1 and isoform 2 are expressed in the esophagus, tongue and trachea. Isoform 2 is also highly expressed in the adrenal cortex and heart.

It localises to the cell membrane. The protein resides in the secreted. May play some biological role in the host defense system on the mucous membrane independently of or in cooperation with other substances in airway mucous or bronchial secretions. Plays a role in the proteolytic processing of ACE2. Preferentially cleaves the C-terminal side of arginine residues at the P1 position of certain peptides. Isoform 2 may play a key role in regulating adrenal proliferation by specifically cleaving N-POMC. This chain is Transmembrane protease serine 11D (Tmprss11d), found in Rattus norvegicus (Rat).